Consider the following 409-residue polypeptide: Probable ATP-dependent RNA helicase MG308 homolog (409 aa).

The Helicase ATP-binding domain maps to 26–179; that stretch reads VFKVWPRQNV…RKQVAPLTVV (154 aa). 39–46 is an ATP binding site; sequence AETGSGKT. The DEVD box motif lies at 126–129; it reads DEVD. The Helicase C-terminal domain maps to 190–349; sequence LVKHFLLNLN…SVHLERDGTL (160 aa).

This sequence belongs to the DEAD box helicase family.

It carries out the reaction ATP + H2O = ADP + phosphate + H(+). This Mycoplasma pneumoniae (strain ATCC 29342 / M129 / Subtype 1) (Mycoplasmoides pneumoniae) protein is Probable ATP-dependent RNA helicase MG308 homolog.